Here is a 320-residue protein sequence, read N- to C-terminus: Undecaprenyl-diphosphatase (320 aa).

A run of 8 helical transmembrane segments spans residues 9–29 (FVLISAVSAALSVVLFPLEVF), 82–102 (GVAFTAIIQLGSIAAVLWYFW), 130–150 (LGIVLGTIPIVFFGLLIKTFI), 161–181 (LGAIAVASIVMSLLLGVGEKL), 191–211 (LTMQDGLLMGLAQALTLIPGV), 236–256 (FLLGIPAITLAGLVELKDLLA), 265–285 (LPLIMGVISAAIFSYLAIAGL), and 296–316 (VFIWYRLVFGVAILGAISAGI).

This sequence belongs to the UppP family.

The protein resides in the cell inner membrane. It catalyses the reaction di-trans,octa-cis-undecaprenyl diphosphate + H2O = di-trans,octa-cis-undecaprenyl phosphate + phosphate + H(+). Catalyzes the dephosphorylation of undecaprenyl diphosphate (UPP). Confers resistance to bacitracin. The chain is Undecaprenyl-diphosphatase from Nostoc sp. (strain PCC 7120 / SAG 25.82 / UTEX 2576).